The sequence spans 26 residues: Superoxide dismutase [Cu-Zn] (26 aa).

Cys7 carries S-palmitoyl cysteine lipidation.

The protein belongs to the Cu-Zn superoxide dismutase family. Homotrimer. It depends on Cu cation as a cofactor. Zn(2+) is required as a cofactor.

Its subcellular location is the cytoplasm. The protein resides in the nucleus. The enzyme catalyses 2 superoxide + 2 H(+) = H2O2 + O2. In terms of biological role, destroys radicals which are normally produced within the cells and which are toxic to biological systems. The protein is Superoxide dismutase [Cu-Zn] (sod1) of Paralichthys olivaceus (Bastard halibut).